The chain runs to 495 residues: Lysine--tRNA ligase (495 aa).

Residues Glu406 and Glu413 each coordinate Mg(2+).

The protein belongs to the class-II aminoacyl-tRNA synthetase family. Homodimer. Mg(2+) is required as a cofactor.

It is found in the cytoplasm. The enzyme catalyses tRNA(Lys) + L-lysine + ATP = L-lysyl-tRNA(Lys) + AMP + diphosphate. This is Lysine--tRNA ligase from Staphylococcus aureus (strain COL).